The following is a 399-amino-acid chain: MTFKTLDDLTDIAGKRVLVRVDLNVPVKDGQVTDTTRIERVAPTIRELSEKGAKVVLLAHFGRPKGEPVADMSLKTIASAVEEILDQRVYFAPDCIGDKAANAIADLNDGEVLLLENTRFHKGEEKNDPAFVTALAANGDIYVNDAFSAAHRAHASTEGLAQHLPAYAGRTMQAELEALEKGLGNPQRPVVAIVGGAKVSTKIDLLQNLVKKVDALVIGGGMANTFLAAQGVDVGKSLCEHDLAETAKAILAAASEAGCAIVLPVDGVVAREFKAGADNEVVDVKAIPADAMMLDVGPKSIDAINEWISRAETLVWNGPLGAFEITPFDKATVAAAKHAAARTRSGSLVSVAGGGDTVAALNHAEVADDFTYVSTAGGAFLEWMEGKPLPGVDILKQQR.

Substrate is bound by residues 22–24 (DLN), R37, 60–63 (HFGR), R119, and R152. ATP is bound by residues K202, E324, and 354–357 (GGDT).

Belongs to the phosphoglycerate kinase family. Monomer.

It is found in the cytoplasm. The enzyme catalyses (2R)-3-phosphoglycerate + ATP = (2R)-3-phospho-glyceroyl phosphate + ADP. It functions in the pathway carbohydrate degradation; glycolysis; pyruvate from D-glyceraldehyde 3-phosphate: step 2/5. This chain is Phosphoglycerate kinase, found in Sinorhizobium medicae (strain WSM419) (Ensifer medicae).